Here is a 425-residue protein sequence, read N- to C-terminus: Palmitoyltransferase ZDHHC23 (425 aa).

Over 1–81 the chain is Cytoplasmic; the sequence is MKPVKKKKTE…RIPWLRGAKK (81 aa). The chain crosses the membrane as a helical span at residues 82–99; the sequence is VNISIVPPLVLLPVFLHV. Residues 100–102 are Lumenal-facing; sequence ASW. The chain crosses the membrane as a helical span at residues 103 to 125; that stretch reads HFLLGVVVLTSLPMLALWYYYLT. The Cytoplasmic segment spans residues 126-130; the sequence is HRRKE. Residues 131–151 traverse the membrane as a helical segment; it reads QTLFFLSLGLFSLGYMYYVFL. Over 152–159 the chain is Lumenal; that stretch reads REVVPQGR. The helical transmembrane segment at 160–180 threads the bilayer; the sequence is VGPTQLALLTCGLLLILLALY. At 181–292 the chain is on the cytoplasmic side; sequence RAKKNPGYLS…NSCVGESNHQ (112 aa). A DHHC domain is found at 249–299; sequence DWCAKCQLVRPARAWHCRICGICVRRMDHHCVWINSCVGESNHQAFILALS. Cys-279 serves as the catalytic S-palmitoyl cysteine intermediate. Residues 293 to 313 form a helical membrane-spanning segment; the sequence is AFILALSIFLLTSVYGISLTL. The Lumenal segment spans residues 314–343; it reads NTICRDRSLFTALFYCPGVYANYSSALSFT. The chain crosses the membrane as a helical span at residues 344-364; sequence CVWYSVIITAGMAYIFLIQLI. At 365–425 the chain is on the cytoplasmic side; sequence NISYNVTERE…TVHTPAEDIV (61 aa). The segment at 422–425 is interaction with NOS1; the sequence is EDIV.

Belongs to the DHHC palmitoyltransferase family. In terms of assembly, interacts with NOS1. In terms of tissue distribution, expressed in the brain.

It is found in the golgi apparatus membrane. Its subcellular location is the golgi apparatus. The protein resides in the trans-Golgi network membrane. It catalyses the reaction L-cysteinyl-[protein] + hexadecanoyl-CoA = S-hexadecanoyl-L-cysteinyl-[protein] + CoA. Palmitoyltransferase that could catalyze the addition of palmitate onto various protein substrates and be involved in a variety of cellular processes. Palmitoyltransferase that mediates palmitoylation of KCNMA1, regulating localization of KCNMA1 to the plasma membrane. May be involved in NOS1 regulation and targeting to the synaptic membrane. In Mus musculus (Mouse), this protein is Palmitoyltransferase ZDHHC23.